The following is a 226-amino-acid chain: Thiopurine S-methyltransferase (226 aa).

Residues tryptophan 16, methionine 51, glutamate 72, and arginine 131 each coordinate S-adenosyl-L-methionine.

It belongs to the class I-like SAM-binding methyltransferase superfamily. TPMT family.

Its subcellular location is the cytoplasm. The enzyme catalyses S-adenosyl-L-methionine + a thiopurine = S-adenosyl-L-homocysteine + a thiopurine S-methylether.. In Francisella tularensis subsp. novicida (strain U112), this protein is Thiopurine S-methyltransferase.